The primary structure comprises 413 residues: Multifunctional CCA protein (413 aa).

Positions 8 and 11 each coordinate ATP. Positions 8 and 11 each coordinate CTP. Mg(2+)-binding residues include Asp-21 and Asp-23. Residues Arg-91, Arg-137, and Arg-140 each coordinate ATP. CTP is bound by residues Arg-91, Arg-137, and Arg-140. The region spanning 228–329 (TGIHTLMVLA…LKVFDKADAW (102 aa)) is the HD domain.

This sequence belongs to the tRNA nucleotidyltransferase/poly(A) polymerase family. Bacterial CCA-adding enzyme type 1 subfamily. In terms of assembly, monomer. Can also form homodimers and oligomers. Mg(2+) is required as a cofactor. Requires Ni(2+) as cofactor.

It catalyses the reaction a tRNA precursor + 2 CTP + ATP = a tRNA with a 3' CCA end + 3 diphosphate. It carries out the reaction a tRNA with a 3' CCA end + 2 CTP + ATP = a tRNA with a 3' CCACCA end + 3 diphosphate. In terms of biological role, catalyzes the addition and repair of the essential 3'-terminal CCA sequence in tRNAs without using a nucleic acid template. Adds these three nucleotides in the order of C, C, and A to the tRNA nucleotide-73, using CTP and ATP as substrates and producing inorganic pyrophosphate. tRNA 3'-terminal CCA addition is required both for tRNA processing and repair. Also involved in tRNA surveillance by mediating tandem CCA addition to generate a CCACCA at the 3' terminus of unstable tRNAs. While stable tRNAs receive only 3'-terminal CCA, unstable tRNAs are marked with CCACCA and rapidly degraded. This Aeromonas salmonicida (strain A449) protein is Multifunctional CCA protein.